The sequence spans 536 residues: Xylulose kinase (536 aa).

Substrate contacts are provided by histidine 99, arginine 170, aspartate 280, and asparagine 281. Residues tryptophan 355, 441 to 442, and asparagine 445 contribute to the ATP site; that span reads GA.

Belongs to the FGGY kinase family. Monomer.

It catalyses the reaction D-xylulose + ATP = D-xylulose 5-phosphate + ADP + H(+). In terms of biological role, phosphorylates D-xylulose to produce D-xylulose 5-phosphate, a molecule that may play an important role in the regulation of glucose metabolism and lipogenesis. This is Xylulose kinase (Xylb) from Rattus norvegicus (Rat).